The sequence spans 927 residues: Protein unc-45 homolog B (927 aa).

TPR repeat units follow at residues 4–37 (PVQL…ITDK), 41–74 (AVLY…DASD), and 76–108 (KALF…EPKN). ARM repeat units lie at residues 167 to 206 (DAGA…GMCT), 209 to 248 (RARA…NIVD), and 746 to 785 (DKLR…NLAV).

It localises to the cytoplasm. It is found in the myofibril. The protein localises to the sarcomere. Its subcellular location is the z line. The protein resides in the a band. It localises to the perinuclear region. It is found in the cytosol. Functionally, acts as a co-chaperone for HSP90 and is required for proper folding of the myosin motor domain. Plays a role in sarcomere formation during muscle cell assembly. Is necessary for normal early lens development. This chain is Protein unc-45 homolog B, found in Xenopus laevis (African clawed frog).